The sequence spans 921 residues: Inner nuclear membrane protein Man1 (921 aa).

Positions A7–E51 constitute an LEM domain. S28 bears the Phosphoserine mark. Disordered regions lie at residues L47 to R97, S136 to G357, and L374 to P395. Low complexity-rich tracts occupy residues Q53–Q62 and T72–G85. Phosphoserine occurs at positions 136, 137, and 140. The segment covering A217–E237 has biased composition (acidic residues). Phosphoserine occurs at positions 261, 263, and 287. Acidic residues predominate over residues S263–D275. The segment covering S308–V317 has biased composition (polar residues). Gly residues predominate over residues P348 to G357. Residue S412 is modified to Phosphoserine. The next 2 helical transmembrane spans lie at M486 to M506 and A637 to V657. The tract at residues V709–S921 is interaction with SMAD1, SMAD2, SMAD3 and SMAD5. Residues Q717–N736 mediate DNA binding. S787 is modified (phosphoserine). T893 bears the Phosphothreonine mark. Phosphoserine is present on S921.

In terms of assembly, interacts with SMAD1, SMAD2, SMAD3 and SMAD5. Binds to both phosphorylated and unphosphorylated R-SMADS.

The protein resides in the nucleus inner membrane. Functionally, can function as a specific repressor of TGF-beta, activin, and BMP signaling through its interaction with the R-SMAD proteins. Antagonizes TGF-beta-induced cell proliferation arrest. The polypeptide is Inner nuclear membrane protein Man1 (Lemd3) (Mus musculus (Mouse)).